The primary structure comprises 152 residues: MRKMLAYTLYIVTYLTYIMNEVECKPYTLPYRNPTDTEIENNTPIKISDTPIPDVDTAVEKKVIEYLVSKNYLRQEHFNTWENLKSLHVLTPGEAQQMIRFKRKERRAILNLQKDYSLPQTGIVDNGVREIIFGSICGTADVDEDSYEEKKR.

The first 24 residues, 1-24, serve as a signal peptide directing secretion; sequence MRKMLAYTLYIVTYLTYIMNEVEC.

This is an uncharacterized protein from Acheta domesticus (House cricket).